The following is a 66-amino-acid chain: Sarcoplasmic/endoplasmic reticulum calcium ATPase regulator ARLN (66 aa).

Met1 carries the N-acetylmethionine modification. A disordered region spans residues 1 to 37; it reads MEVDAPGVDGRDGLRERRGFSEGGRQNFDVRPQSGAN. Basic and acidic residues predominate over residues 9–20; that stretch reads DGRDGLRERRGF. A helical transmembrane segment spans residues 45 to 65; sequence WLDLWLFILFDVVVFLFVYFL.

Homooligomer. Can also form heterooligomers with other sarcoplasmic/endoplasmic reticulum calcium ATPase (SERCA) regulators ERLN, PLN, SLN and STRIT1/DWORF. Monomer. Interacts as a monomer with ATP2A2/SERCA2; the interaction results in inhibition of ATP2A2 Ca(2+) affinity.

Its subcellular location is the endoplasmic reticulum membrane. Inhibits the activity of the calcium ATPases ATP2A2/SERCA2 and ATP2A3/SERCA3 by decreasing their apparent affinity for Ca(2+). This Homo sapiens (Human) protein is Sarcoplasmic/endoplasmic reticulum calcium ATPase regulator ARLN.